Reading from the N-terminus, the 865-residue chain is FO synthase (865 aa).

Residues 1–21 (MIEGVTELATPNVPPAPPSPS) form a disordered region. 2 Radical SAM core domains span residues 76–320 (ITYS…LGPD) and 544–785 (VTYV…DNIQ). The cofG-like stretch occupies residues 77-409 (TYSRNVFIPL…PRIGAHVAAL (333 aa)). 6 residues coordinate [4Fe-4S] cluster: Cys-90, Cys-94, Cys-97, Cys-558, Cys-562, and Cys-565. Residues 521-854 (DGAELDAVAA…RERTTVYGRV (334 aa)) form a cofH-like region.

It in the N-terminal section; belongs to the radical SAM superfamily. CofG family. This sequence in the C-terminal section; belongs to the radical SAM superfamily. CofH family. It depends on [4Fe-4S] cluster as a cofactor.

It catalyses the reaction 5-amino-6-(D-ribitylamino)uracil + L-tyrosine + S-adenosyl-L-methionine = 5-amino-5-(4-hydroxybenzyl)-6-(D-ribitylimino)-5,6-dihydrouracil + 2-iminoacetate + 5'-deoxyadenosine + L-methionine + H(+). The catalysed reaction is 5-amino-5-(4-hydroxybenzyl)-6-(D-ribitylimino)-5,6-dihydrouracil + S-adenosyl-L-methionine = 7,8-didemethyl-8-hydroxy-5-deazariboflavin + 5'-deoxyadenosine + L-methionine + NH4(+) + H(+). It participates in cofactor biosynthesis; coenzyme F0 biosynthesis. Functionally, catalyzes the radical-mediated synthesis of 7,8-didemethyl-8-hydroxy-5-deazariboflavin (FO) from 5-amino-6-(D-ribitylamino)uracil and L-tyrosine. The chain is FO synthase (fbiC) from Nocardia farcinica (strain IFM 10152).